The chain runs to 294 residues: MEDYTKAEILIEALPYICKFHDQKFLIKYGGHAMVNEQARSWIAKDLVLLKYVGINPIVVHGGGPEINRAMEKMGKKPEFIHGLRVTDEETLDIVKMVLIGKINGDIVSKLERYGGKAVGLSGKSGQLIKAKKKIQYLMKDSQKIEVDLGMVGEVEHVDTKLIDILVEKRYIPVISPIGVDHQGNDLNLNADIAAGDIAGAMDAKKLIMVTDVDGIMDDVNDQSTLHRRLTISQIEDMIEKGLITGGMIPKIEACINALDKGVQSVHIVNGKTPHAVLLEIFTEDGVGTMIVRE.

Residues 63-64, Arg85, and Asn188 contribute to the substrate site; that span reads GG.

This sequence belongs to the acetylglutamate kinase family. ArgB subfamily.

The protein resides in the cytoplasm. The catalysed reaction is N-acetyl-L-glutamate + ATP = N-acetyl-L-glutamyl 5-phosphate + ADP. It participates in amino-acid biosynthesis; L-arginine biosynthesis; N(2)-acetyl-L-ornithine from L-glutamate: step 2/4. Its function is as follows. Catalyzes the ATP-dependent phosphorylation of N-acetyl-L-glutamate. This is Acetylglutamate kinase from Methanococcus maripaludis (strain C5 / ATCC BAA-1333).